Consider the following 327-residue polypeptide: Ferrochelatase 2 (327 aa).

Positions 201 and 282 each coordinate Fe cation.

It belongs to the ferrochelatase family.

Its subcellular location is the cytoplasm. The catalysed reaction is heme b + 2 H(+) = protoporphyrin IX + Fe(2+). The protein operates within porphyrin-containing compound metabolism; protoheme biosynthesis; protoheme from protoporphyrin-IX: step 1/1. Catalyzes the ferrous insertion into protoporphyrin IX. The sequence is that of Ferrochelatase 2 from Shewanella oneidensis (strain ATCC 700550 / JCM 31522 / CIP 106686 / LMG 19005 / NCIMB 14063 / MR-1).